Reading from the N-terminus, the 187-residue chain is UPF0301 protein VS_2679 (187 aa).

The protein belongs to the UPF0301 (AlgH) family.

This chain is UPF0301 protein VS_2679, found in Vibrio atlanticus (strain LGP32) (Vibrio splendidus (strain Mel32)).